A 199-amino-acid polypeptide reads, in one-letter code: 7-methyl-GTP pyrophosphatase (199 aa).

Asp73 functions as the Proton acceptor in the catalytic mechanism.

This sequence belongs to the Maf family. YceF subfamily. Requires a divalent metal cation as cofactor.

Its subcellular location is the cytoplasm. It carries out the reaction N(7)-methyl-GTP + H2O = N(7)-methyl-GMP + diphosphate + H(+). Its function is as follows. Nucleoside triphosphate pyrophosphatase that hydrolyzes 7-methyl-GTP (m(7)GTP). May have a dual role in cell division arrest and in preventing the incorporation of modified nucleotides into cellular nucleic acids. The chain is 7-methyl-GTP pyrophosphatase from Bordetella bronchiseptica (strain ATCC BAA-588 / NCTC 13252 / RB50) (Alcaligenes bronchisepticus).